We begin with the raw amino-acid sequence, 697 residues long: Elongation factor G (697 aa).

The tr-type G domain occupies 8–290 (ERYRNIGISA…AVLDFLPSPV (283 aa)). GTP contacts are provided by residues 17 to 24 (AHIDAGKT), 88 to 92 (DTPGH), and 142 to 145 (NKMD).

Belongs to the TRAFAC class translation factor GTPase superfamily. Classic translation factor GTPase family. EF-G/EF-2 subfamily.

It is found in the cytoplasm. Catalyzes the GTP-dependent ribosomal translocation step during translation elongation. During this step, the ribosome changes from the pre-translocational (PRE) to the post-translocational (POST) state as the newly formed A-site-bound peptidyl-tRNA and P-site-bound deacylated tRNA move to the P and E sites, respectively. Catalyzes the coordinated movement of the two tRNA molecules, the mRNA and conformational changes in the ribosome. In Methylobacillus flagellatus (strain ATCC 51484 / DSM 6875 / VKM B-1610 / KT), this protein is Elongation factor G.